The primary structure comprises 366 residues: Mitogen-activated protein kinase 13 (366 aa).

In terms of domain architecture, Protein kinase spans 25–308; sequence YVSLTHIGSG…ASQALAHPFF (284 aa). 31–39 is a binding site for ATP; that stretch reads IGSGAYGSV. Ser47 is modified (phosphoserine). Residue Lys54 participates in ATP binding. Asp150 (proton acceptor) is an active-site residue. A Phosphothreonine; by MAP2K3, MAP2K4, MAP2K6 and MAP2K7 modification is found at Thr180. The TXY motif lies at 180-182; sequence TGY. Residue Tyr182 is modified to Phosphotyrosine; by MAP2K3, MAP2K4, MAP2K6 and MAP2K7. Ser350 is subject to Phosphoserine.

Belongs to the protein kinase superfamily. CMGC Ser/Thr protein kinase family. MAP kinase subfamily. Interacts with MAPK8IP2. Mg(2+) serves as cofactor. In terms of processing, dually phosphorylated on Thr-180 and Tyr-182 by MAP2K3/MKK3, MAP2K4/MKK4, MAP2K6/MKK6 and MAP2K7/MKK7, which activates the enzyme. Dephosphorylated by dual specificity phosphatase DUSP1.

The enzyme catalyses L-seryl-[protein] + ATP = O-phospho-L-seryl-[protein] + ADP + H(+). The catalysed reaction is L-threonyl-[protein] + ATP = O-phospho-L-threonyl-[protein] + ADP + H(+). Its activity is regulated as follows. Activated by phosphorylation on threonine and tyrosine by dual specificity kinases, MAP2K3/MKK3 MAP2K6/MKK6, MAP2K4/MKK4 and MAP2K7/MKK7. Activation by ultraviolet radiation, hyperosmotic shock, anisomycin or by TNF-alpha is mediated by MAP2K3/MKK3. Inhibited by dual specificity phosphatase DUSP1. In terms of biological role, serine/threonine kinase which acts as an essential component of the MAP kinase signal transduction pathway. MAPK13 is one of the four p38 MAPKs which play an important role in the cascades of cellular responses evoked by extracellular stimuli such as pro-inflammatory cytokines or physical stress leading to direct activation of transcription factors such as ELK1 and ATF2. Accordingly, p38 MAPKs phosphorylate a broad range of proteins and it has been estimated that they may have approximately 200 to 300 substrates each. MAPK13 is one of the less studied p38 MAPK isoforms. Some of the targets are downstream kinases such as MAPKAPK2, which are activated through phosphorylation and further phosphorylate additional targets. Plays a role in the regulation of protein translation by phosphorylating and inactivating EEF2K. Involved in cytoskeletal remodeling through phosphorylation of MAPT and STMN1. Mediates UV irradiation induced up-regulation of the gene expression of CXCL14. Plays an important role in the regulation of epidermal keratinocyte differentiation, apoptosis and skin tumor development. Phosphorylates the transcriptional activator MYB in response to stress which leads to rapid MYB degradation via a proteasome-dependent pathway. MAPK13 also phosphorylates and down-regulates PRKD1 during regulation of insulin secretion in pancreatic beta cells. The protein is Mitogen-activated protein kinase 13 (MAPK13) of Bos taurus (Bovine).